Consider the following 590-residue polypeptide: Cyclin-dependent kinase-like 3 (590 aa).

In terms of domain architecture, Protein kinase spans 4–286 (YETLGKVGEG…SSDLLHHEYF (283 aa)). Residues 10–18 (VGEGSYGTV) and Lys33 contribute to the ATP site. The [NKR]KIAxRE motif lies at 45-51 (KIAMREI). The Proton acceptor role is filled by Asp125. At Thr158 the chain carries Phosphothreonine. At Tyr160 the chain carries Phosphotyrosine. Disordered regions lie at residues 459 to 508 (RAKK…SNEN) and 547 to 590 (LKRE…PDVE). Positions 466 to 477 (SSQSIGQVMPNS) are enriched in polar residues. Composition is skewed to basic and acidic residues over residues 547–556 (LKRESKKTDS) and 580–590 (TERKKNLPDVE).

It belongs to the protein kinase superfamily. CMGC Ser/Thr protein kinase family. CDC2/CDKX subfamily.

Its subcellular location is the cytoplasm. The catalysed reaction is L-seryl-[protein] + ATP = O-phospho-L-seryl-[protein] + ADP + H(+). It carries out the reaction L-threonyl-[protein] + ATP = O-phospho-L-threonyl-[protein] + ADP + H(+). This is Cyclin-dependent kinase-like 3 from Macaca fascicularis (Crab-eating macaque).